Reading from the N-terminus, the 164-residue chain is Putative pre-16S rRNA nuclease (164 aa).

Belongs to the YqgF nuclease family.

It is found in the cytoplasm. In terms of biological role, could be a nuclease involved in processing of the 5'-end of pre-16S rRNA. In Rhizobium rhizogenes (strain K84 / ATCC BAA-868) (Agrobacterium radiobacter), this protein is Putative pre-16S rRNA nuclease.